A 382-amino-acid chain; its full sequence is Probable G-protein coupled receptor 132 (382 aa).

Residues 1-42 lie on the Extracellular side of the membrane; it reads MRSEPTNAAGNTTLGVTSVLQSTSVPSSETCHVSYEESRVVL. The N-linked (GlcNAc...) asparagine glycan is linked to asparagine 11. A helical membrane pass occupies residues 43–65; it reads VVVYSAVCLLGLPANCLTAWLTL. Over 66–76 the chain is Cytoplasmic; that stretch reads LQVLQRNVLAV. The chain crosses the membrane as a helical span at residues 77-99; it reads YLFCLSLCELLYISTVPLWIIYI. Topologically, residues 100-113 are extracellular; that stretch reads QNQHKWNLGPQACK. A disulfide bridge links cysteine 112 with cysteine 184. The chain crosses the membrane as a helical span at residues 114-135; that stretch reads VTAYIFFCNIYISILLLCCISC. Topologically, residues 136 to 155 are cytoplasmic; sequence DRYMAVVYALESRGHRHQRT. The helical transmembrane segment at 156–175 threads the bilayer; it reads AVTISACVILLVGLVNYPVF. Topologically, residues 176 to 198 are extracellular; that stretch reads DMKVEKSFCFEPLRMNSKIAGYH. A helical transmembrane segment spans residues 199–221; that stretch reads YLRFTFGFAIPLGILAFTNHQIF. At 222–241 the chain is on the cytoplasmic side; the sequence is RSIKLSDSLSAAQKNKVKRS. The chain crosses the membrane as a helical span at residues 242–261; it reads AIAVVTIFLVCFAPYHVVLL. Residues 262–286 lie on the Extracellular side of the membrane; it reads VKAASFSFYQGDMDAVCAFESRLYT. Residues 287-309 form a helical membrane-spanning segment; it reads VSMVFLCLSTVNSVADPIIYVLG. Topologically, residues 310–382 are cytoplasmic; sequence TDHSRQEVSR…SPERLPEELC (73 aa).

It belongs to the G-protein coupled receptor 1 family. Highly expressed in hematopoietic tissues rich in lymphocytes like spleen and thymus. Weakly expressed in heart and lung. Highly expressed in infiltrating macrophages within atherosclerotic lesions.

The protein localises to the cell membrane. Functionally, may be a receptor for oxidized free fatty acids derived from linoleic and arachidonic acids such as 9-hydroxyoctadecadienoic acid (9-HODE). Activates a G alpha protein, most likely G alpha(q). May be involved in apoptosis. Functions at the G2/M checkpoint to delay mitosis. May function as a sensor that monitors the oxidative states and mediates appropriate cellular responses such as secretion of paracrine signals and attenuation of proliferation. May mediate ths accumulation of intracellular inositol phosphates at acidic pH through proton-sensing activity. The protein is Probable G-protein coupled receptor 132 (Gpr132) of Mus musculus (Mouse).